Here is a 204-residue protein sequence, read N- to C-terminus: Demethylsterigmatocystin 6-O-methyltransferase stcP (204 aa).

S-adenosyl-L-methionine contacts are provided by residues 48–49 (GG), aspartate 73, 93–94 (DF), and arginine 109. Histidine 113 serves as the catalytic Proton acceptor.

This sequence belongs to the class I-like SAM-binding methyltransferase superfamily. Cation-independent O-methyltransferase family.

The enzyme catalyses 6-demethylsterigmatocystin + S-adenosyl-L-methionine = sterigmatocystin + S-adenosyl-L-homocysteine + H(+). The protein operates within mycotoxin biosynthesis; sterigmatocystin biosynthesis. Norsolorinic acid reductase; part of the gene cluster that mediates the biosynthesis of sterigmatocystin (ST), a polyketide-derived furanocoumarin which is part of the most toxic and carcinogenic compounds among the known mycotoxins. The first step in the biosynthesis of sterigmatocystin is the production of hexanoate by the fatty acid synthase (FAS) units stcJ and stcK. The polyketide backbone is assembled by the non-reducing polyketide synthase stcA by condensation of the starter hexanoyl-CoA and 7 malonyl-CoA extender units followed by cyclization and release of norsolorinic acid. Norsolorinic acid is the first stable intermediate in the biosynthesis of sterigmatocystin and is converted into averantin (AVN) by the ketoreductase stcE which reduces the hexanoate ketone to an alcohol. Averantin is then oxidized into 5'-hydroxyaverantin (HAVN) by the cytochrome P450 monooxygenase stcF. 5'-hydroxyaverantin is further converted to 5'-oxyaverantin (OAVN) by the 5'-hydroxyaverantin dehydrogenase stcG. The next step is the conversion of OAVN into averufin (AVF) which is catalyzed by a yet to be identified enzyme. The cytochrome P450 monooxygenase stcB and the flavin-binding monooxygenase stcW are both required for the conversion of averufin to 1-hydroxyversicolorone. The esterase stcI probably catalyzes the formation of versiconal hemiacetal acetate from 1-hydroxyversicolorone. The oxydoreductase stcN then probably catalyzes the biosynthetic step from versiconal to versicolorin B (VERB). The next step is performed by the versicolorin B desaturase stcL to produce versicolorin A (VERA). The ketoreductase stcU and the cytochrome P450 monooxygenase stcS are involved in the conversion of versicolorin A to demethylsterigmatocystin. The Baeyer-Villiger oxidas stcQ and the reductase stcR might be involved in the biosynthetic step from versicolorin A to demethylsterigmatocystin. The final step in the biosynthesis of sterigmatocystin is the methylation of demethylsterigmatocystin catalyzed by the methyltransferase stcP. This is Demethylsterigmatocystin 6-O-methyltransferase stcP from Emericella nidulans (strain FGSC A4 / ATCC 38163 / CBS 112.46 / NRRL 194 / M139) (Aspergillus nidulans).